The chain runs to 415 residues: Branched-chain-amino-acid aminotransferase 5, chloroplastic (415 aa).

A chloroplast-targeting transit peptide spans 1-65; the sequence is MERSAVASGF…IVSEVSRNRR (65 aa). K261 is modified (N6-(pyridoxal phosphate)lysine).

It belongs to the class-IV pyridoxal-phosphate-dependent aminotransferase family. Pyridoxal 5'-phosphate serves as cofactor.

The protein resides in the plastid. It is found in the chloroplast. It carries out the reaction L-leucine + 2-oxoglutarate = 4-methyl-2-oxopentanoate + L-glutamate. It catalyses the reaction L-isoleucine + 2-oxoglutarate = (S)-3-methyl-2-oxopentanoate + L-glutamate. The catalysed reaction is L-valine + 2-oxoglutarate = 3-methyl-2-oxobutanoate + L-glutamate. It functions in the pathway amino-acid biosynthesis; L-isoleucine biosynthesis; L-isoleucine from 2-oxobutanoate: step 4/4. The protein operates within amino-acid biosynthesis; L-leucine biosynthesis; L-leucine from 3-methyl-2-oxobutanoate: step 4/4. Its pathway is amino-acid biosynthesis; L-valine biosynthesis; L-valine from pyruvate: step 4/4. In terms of biological role, converts 2-oxo acids to branched-chain amino acids. Acts on leucine, isoleucine and valine. The polypeptide is Branched-chain-amino-acid aminotransferase 5, chloroplastic (BCAT5) (Arabidopsis thaliana (Mouse-ear cress)).